Consider the following 1284-residue polypeptide: Peroxisomal ATPase PEX1 (1284 aa).

A disordered region spans residues 339–373 (SPKQQQDKSKQGVLLPDKEKQLSKSPDHKQISSNR). Over residues 343–373 (QQDKSKQGVLLPDKEKQLSKSPDHKQISSNR) the composition is skewed to basic and acidic residues. Residues 600 to 607 (GGKGSGKS) and 882 to 889 (GPPGTGKT) each bind ATP. A phosphoserine mark is found at Ser1182, Ser1210, and Ser1212. The tract at residues 1261 to 1284 (FQNPKKRKNQSGTVFRTGQKVTLA) is disordered. Over residues 1270-1284 (QSGTVFRTGQKVTLA) the composition is skewed to polar residues.

The protein belongs to the AAA ATPase family. Homooligomer; homooligomerizes in the cytosol, interaction with PEX6 promotes dissociation of the homooligomer. Interacts with PEX6; forming the PEX1-PEX6 AAA ATPase complex, which is composed of a heterohexamer formed by a trimer of PEX1-PEX6 dimers. Interacts indirectly with PEX26, via its interaction with PEX6.

Its subcellular location is the cytoplasm. The protein resides in the cytosol. It is found in the peroxisome membrane. The enzyme catalyses ATP + H2O = ADP + phosphate + H(+). Its function is as follows. Component of the PEX1-PEX6 AAA ATPase complex, a protein dislocase complex that mediates the ATP-dependent extraction of the PEX5 receptor from peroxisomal membranes, an essential step for PEX5 recycling. Specifically recognizes PEX5 monoubiquitinated at 'Cys-11', and pulls it out of the peroxisome lumen through the PEX2-PEX10-PEX12 retrotranslocation channel. Extraction by the PEX1-PEX6 AAA ATPase complex is accompanied by unfolding of the TPR repeats and release of bound cargo from PEX5. The chain is Peroxisomal ATPase PEX1 from Mus musculus (Mouse).